A 160-amino-acid chain; its full sequence is Large ribosomal subunit protein uL22c (160 aa).

The protein belongs to the universal ribosomal protein uL22 family. Part of the 50S ribosomal subunit.

The protein localises to the plastid. Its subcellular location is the chloroplast. Functionally, this protein binds specifically to 23S rRNA. The globular domain of the protein is located near the polypeptide exit tunnel on the outside of the subunit, while an extended beta-hairpin is found that lines the wall of the exit tunnel in the center of the 70S ribosome. This is Large ribosomal subunit protein uL22c (rpl22) from Aethionema cordifolium (Lebanon stonecress).